The primary structure comprises 319 residues: Beta-sarcoglycan (319 aa).

Over residues M1 to A10 the composition is skewed to low complexity. Residues M1–V33 form a disordered region. Residues M1–A66 lie on the Cytoplasmic side of the membrane. Over residues S22–V33 the composition is skewed to basic and acidic residues. Residues I67–I87 form a helical; Signal-anchor for type II membrane protein membrane-spanning segment. At W88–T318 the chain is on the extracellular side. N-linked (GlcNAc...) asparagine glycosylation is found at N159, N212, and N259. 2 disulfide bridges follow: C289/C315 and C291/C308.

The protein belongs to the sarcoglycan beta/delta/gamma/zeta family. Cross-link to form 2 major subcomplexes: one consisting of SGCB, SGCD and SGCG and the other consisting of SGCB and SGCD. The association between SGCB and SGCG is particularly strong while SGCA is loosely associated with the other sarcoglycans. In terms of processing, disulfide bonds are present.

It localises to the cell membrane. It is found in the sarcolemma. The protein resides in the cytoplasm. Its subcellular location is the cytoskeleton. In terms of biological role, component of the sarcoglycan complex, a subcomplex of the dystrophin-glycoprotein complex which forms a link between the F-actin cytoskeleton and the extracellular matrix. In Pongo abelii (Sumatran orangutan), this protein is Beta-sarcoglycan (SGCB).